Here is a 289-residue protein sequence, read N- to C-terminus: HTH-type transcriptional regulator SoxR (289 aa).

Residues Met1–Asn58 enclose the HTH lysR-type domain. Positions Val18–Gln37 form a DNA-binding region, H-T-H motif.

The protein belongs to the LysR transcriptional regulatory family.

Functionally, transcriptional repressor of soxA gene expression. The sequence is that of HTH-type transcriptional regulator SoxR (soxR) from Arthrobacter sp. (strain TE1826).